The sequence spans 239 residues: Ribonuclease PH (239 aa).

Phosphate is bound by residues Arg-86 and 124–126 (GTR).

It belongs to the RNase PH family. As to quaternary structure, homohexameric ring arranged as a trimer of dimers.

The catalysed reaction is tRNA(n+1) + phosphate = tRNA(n) + a ribonucleoside 5'-diphosphate. Its function is as follows. Phosphorolytic 3'-5' exoribonuclease that plays an important role in tRNA 3'-end maturation. Removes nucleotide residues following the 3'-CCA terminus of tRNAs; can also add nucleotides to the ends of RNA molecules by using nucleoside diphosphates as substrates, but this may not be physiologically important. Probably plays a role in initiation of 16S rRNA degradation (leading to ribosome degradation) during starvation. The sequence is that of Ribonuclease PH from Rickettsia felis (strain ATCC VR-1525 / URRWXCal2) (Rickettsia azadi).